Here is a 549-residue protein sequence, read N- to C-terminus: Undecaprenyl phosphate-alpha-4-amino-4-deoxy-L-arabinose arabinosyl transferase (549 aa).

12 helical membrane passes run 9 to 29, 80 to 100, 112 to 132, 136 to 156, 176 to 196, 204 to 224, 256 to 276, 288 to 308, 312 to 332, 346 to 366, 376 to 396, and 402 to 422; these read LLLIAFGLFYLVPLSNHGLWI, LFGVRIASVVATALSVLLAYL, SLACALLYASFGLIAGQSGYA, PQFTFWVNLSLVALWHALDAG, FLTKGFLAWLLPVLVALPYML, LLGYGALAVLAALLVCLPWAL, PWWFYLPLLAVACLPWSGLLP, QAPVVFLALWLLLPLAFFSLS, LPTYIMPCLLPLALLMGHALV, NGLLNLGLALLALAALAYLQL, FELFLVLLVIGAWAAAGLAQW, and AWAAPLLASWVLIALLPAAMP.

This sequence belongs to the glycosyltransferase 83 family.

The protein localises to the cell inner membrane. The enzyme catalyses 4-amino-4-deoxy-alpha-L-arabinopyranosyl di-trans,octa-cis-undecaprenyl phosphate + lipid IVA = lipid IIA + di-trans,octa-cis-undecaprenyl phosphate.. It participates in lipopolysaccharide metabolism; 4-amino-4-deoxy-beta-L-arabinose-lipid A biosynthesis. Catalyzes the transfer of the L-Ara4N moiety of the glycolipid undecaprenyl phosphate-alpha-L-Ara4N to lipid A. The modified arabinose is attached to lipid A and is required for resistance to polymyxin and cationic antimicrobial peptides. The chain is Undecaprenyl phosphate-alpha-4-amino-4-deoxy-L-arabinose arabinosyl transferase from Pseudomonas aeruginosa (strain ATCC 15692 / DSM 22644 / CIP 104116 / JCM 14847 / LMG 12228 / 1C / PRS 101 / PAO1).